Here is a 909-residue protein sequence, read N- to C-terminus: Short transient receptor potential channel 3 (909 aa).

The segment at 1–92 is disordered; the sequence is MSTKVKKCRE…VRGPAFMFGA (92 aa). Residues 1–447 lie on the Cytoplasmic side of the membrane; that stretch reads MSTKVKKCRE…KILRSPFMKF (447 aa). A compositionally biased stretch (acidic residues) spans 19-28; sequence PEEEDGEAEG. Pro residues predominate over residues 47–57; that stretch reads PPCPRAPPSPG. A compositionally biased stretch (low complexity) spans 58 to 67; the sequence is PDASSEGSPS. ANK repeat units lie at residues 99 to 128, 134 to 163, 165 to 191, and 220 to 249; these read AEEE…TLNV, MGQN…LARI, DALL…FAAS, and PDIT…RIER. E146 is a Ca(2+) binding site. Residues 448-465 traverse the membrane as a helical segment; sequence VAHAASFIIFLGLLVFNA. Topologically, residues 466-496 are extracellular; it reads SDRFEGITTLPNITVIDYPKQIFRVKTTQFT. N477 carries N-linked (GlcNAc...) asparagine glycosylation. A helical transmembrane segment spans residues 497 to 515; sequence WTEMLIMVWVLGMMWSECK. E513, E516, and N531 together coordinate Ca(2+). The Cytoplasmic portion of the chain corresponds to 516–528; that stretch reads ELWLEGPREYIVQ. Residues 529–550 traverse the membrane as a helical segment; sequence LWNVLDFGMLSIFIAAFTARFL. Residues 551-594 are Extracellular-facing; that stretch reads AFLQATKAQQYVDSHVQESDLSEVTLPPEVQYFTYARDKWLPSD. The chain crosses the membrane as a helical span at residues 595–618; that stretch reads PQIISEGLYAIAVVLSFSRIAYIL. The Cytoplasmic segment spans residues 619 to 637; that stretch reads PANESFGPLQISLGRTVKD. The stretch at 622–651 is one ANK 5 repeat; that stretch reads ESFGPLQISLGRTVKDIFKFMVLFIMVFLA. A helical transmembrane segment spans residues 638 to 661; the sequence is IFKFMVLFIMVFLAFMIGMFILYS. Residues 662–701 are Extracellular-facing; sequence YYLGAKVNPAFTTVEESFKTLFWSIFGLSEVTSVVLKYDH. The helical transmembrane segment at 702–727 threads the bilayer; that stretch reads KFIENIGYVLYGIYNVTMVVVLLNML. Topologically, residues 728–909 are cytoplasmic; that stretch reads IAMINSSYQE…KLNPSALRCE (182 aa). Ca(2+) contacts are provided by E859, E862, E864, and D871.

The protein belongs to the transient receptor (TC 1.A.4) family. STrpC subfamily. TRPC3 sub-subfamily. As to quaternary structure, homotetramer. Interacts with ITPR1, ITPR3, MX1 and RNF24. Interacts with JPH2; the interaction is involved in maintaining Ca(2+) homeostasis in skeletal muscle and is mediated by JPH2 'Ser-165' phosphorylation.

The protein resides in the cell membrane. It carries out the reaction Ca(2+)(in) = Ca(2+)(out). Its activity is regulated as follows. Activated by diacylglycerol (DAG) in a membrane-delimited fashion, independently of protein kinase C. Activated by inositol 1,4,5-triphosphate receptors (ITPR) with bound IP3. May be activated by internal calcium store depletion. Inhibited by intracellular Ca(2+). Functionally, forms a receptor-activated non-selective calcium permeant cation channel. May be operated by a phosphatidylinositol second messenger system activated by receptor tyrosine kinases or G-protein coupled receptors. The protein is Short transient receptor potential channel 3 (Trpc3) of Rattus norvegicus (Rat).